Reading from the N-terminus, the 227-residue chain is Phosphatidylethanolamine-binding protein 4 (227 aa).

Residues 1-22 form the signal peptide; that stretch reads MGWTMRLVTAALLLGLMMVVTG. The N-linked (GlcNAc...) (complex) asparagine glycan is linked to asparagine 169. Residues 188 to 227 form an important for secretion region; the sequence is EPEASTQFMTQNYQDSPTLQAPRERASEPKHKNQAEIAAC. Residues 202–227 form a disordered region; sequence DSPTLQAPRERASEPKHKNQAEIAAC. Positions 209–221 are enriched in basic and acidic residues; the sequence is PRERASEPKHKNQ.

The protein belongs to the phosphatidylethanolamine-binding protein family.

The protein resides in the secreted. Promotes AKT phosphorylation, suggesting a possible role in the PI3K-AKT signaling pathway. The protein is Phosphatidylethanolamine-binding protein 4 (PEBP4) of Homo sapiens (Human).